Consider the following 467-residue polypeptide: Glutamate--tRNA ligase (467 aa).

The 'HIGH' region motif lies at 9–19; it reads PSPTGYLHIGG. The short motif at 237–241 is the 'KMSKS' region element; that stretch reads KLSKR. Residue K240 participates in ATP binding.

It belongs to the class-I aminoacyl-tRNA synthetase family. Glutamate--tRNA ligase type 1 subfamily. As to quaternary structure, monomer.

It is found in the cytoplasm. The catalysed reaction is tRNA(Glu) + L-glutamate + ATP = L-glutamyl-tRNA(Glu) + AMP + diphosphate. Catalyzes the attachment of glutamate to tRNA(Glu) in a two-step reaction: glutamate is first activated by ATP to form Glu-AMP and then transferred to the acceptor end of tRNA(Glu). The polypeptide is Glutamate--tRNA ligase (Xylella fastidiosa (strain M23)).